A 186-amino-acid polypeptide reads, in one-letter code: Mitochondrial import inner membrane translocase subunit Tim22 (186 aa).

2 disulfides stabilise this stretch: Cys-61–Cys-133 and Cys-152–Cys-171. The next 3 helical transmembrane spans lie at 66–86 (ALAC…TAGI), 117–135 (YAKN…ECLV), and 162–182 (AGLK…AVID).

It belongs to the Tim17/Tim22/Tim23 family. In terms of assembly, core component of the TIM22 complex.

It localises to the mitochondrion inner membrane. Functionally, essential core component of the TIM22 complex, a complex that mediates the import and insertion of multi-pass transmembrane proteins into the mitochondrial inner membrane. In the TIM22 complex, it constitutes the voltage-activated and signal-gated channel. Forms a twin-pore translocase that uses the membrane potential as external driving force in 2 voltage-dependent steps. In Xenopus tropicalis (Western clawed frog), this protein is Mitochondrial import inner membrane translocase subunit Tim22 (timm22).